Reading from the N-terminus, the 425-residue chain is Septin-7 (425 aa).

In terms of domain architecture, Septin-type G spans 28–297; the sequence is RGFEFTLMVV…ENYRSRKLAA (270 aa). The segment at 38 to 45 is G1 motif; that stretch reads GESGLGKS. GTP contacts are provided by residues 38 to 45, Thr71, Gly97, 176 to 184, Gly231, and Arg246; these read GESGLGKS and KADTLTPEE. A G3 motif region spans residues 94 to 97; that stretch reads DTPG. A G4 motif region spans residues 175–178; that stretch reads AKAD. A coiled-coil region spans residues 324–421; that stretch reads LAQMEEERRE…SRTLEKNKKK (98 aa).

Belongs to the TRAFAC class TrmE-Era-EngA-EngB-Septin-like GTPase superfamily. Septin GTPase family. As to quaternary structure, monomer, and homodimer. Nucleotide binding promotes oligomerization. Can form heterooligomers with other family members and form filaments.

It localises to the cytoplasm. The protein localises to the chromosome. The protein resides in the centromere. It is found in the kinetochore. Its subcellular location is the cytoskeleton. It localises to the spindle. The protein localises to the cleavage furrow. The protein resides in the midbody. It is found in the cilium axoneme. Functionally, filament-forming cytoskeletal GTPase. Required for normal organization of the actin cytoskeleton. Required for normal progress through mitosis. Involved in cytokinesis. Plays a role in ciliogenesis and collective cell movements including convergent extension during gastrulation. Controls cell elongation but not polarization during convergent extension. This is Septin-7 from Xenopus laevis (African clawed frog).